The chain runs to 223 residues: Kinetochore protein Spc25 (223 aa).

A coiled-coil region spans residues 51 to 119; sequence RHQRKVGKLQ…NEIMERIQTL (69 aa).

Belongs to the SPC25 family. As to quaternary structure, component of the Ndc80 complex, which is composed of Ndc80, Nuf2 and Spc25.

The protein resides in the nucleus. It localises to the chromosome. Its subcellular location is the centromere. The protein localises to the kinetochore. Acts as a component of the essential kinetochore-associated Ndc80 complex, which is required for chromosome segregation and spindle checkpoint activity during meiosis and mitosis. Required for kinetochore integrity and the organization of stable microtubule binding sites in the outer plate of the kinetochore. Participates in SAC signaling that responds specifically to disruptions in spindle microtubule dynamics. The NDC80 complex synergistically enhances the affinity of the SKA1 complex for microtubules and may allow the NDC80 complex to track depolymerizing microtubules. This chain is Kinetochore protein Spc25, found in Drosophila teissieri (Fruit fly).